A 139-amino-acid chain; its full sequence is Maximins 4/H3 type 7 (139 aa).

The N-terminal stretch at 1–18 (MNFKYIVAVSFLIASAYA) is a signal peptide. Residues 19–43 (RSVQNDEQSLSQRDVLEEESLREIR) constitute a propeptide that is removed on maturation. Asn70 carries the post-translational modification Asparagine amide. The propeptide occupies 74–118 (TAEDHEVMKRLEAIMRDLDSLDYPEEASERETRGFNQDEIAKEKR). Ile138 is modified (isoleucine amide).

The protein belongs to the bombinin family. In terms of tissue distribution, expressed by the skin glands.

The protein localises to the secreted. Functionally, maximin-4 shows antibacterial activity against both Gram-positive and Gram-negative bacteria. It also shows antimicrobial activity against the fungus C.albicans, but not against A.flavus nor P.uticale. It has little hemolytic activity. It does not possess a significant cytotoxicity against tumor cell lines. It does not possess a significant anti-HIV activity. Maximin-H3 shows antibacterial activity against both Gram-positive and Gram-negative bacteria. It also shows antimicrobial activity against the fungus C.albicans. Shows strong hemolytic activity. This chain is Maximins 4/H3 type 7, found in Bombina maxima (Giant fire-bellied toad).